The chain runs to 121 residues: Basic phospholipase A2 homolog piratoxin-2 (121 aa).

7 cysteine pairs are disulfide-bonded: cysteine 26–cysteine 115, cysteine 28–cysteine 44, cysteine 43–cysteine 95, cysteine 49–cysteine 121, cysteine 50–cysteine 88, cysteine 57–cysteine 81, and cysteine 75–cysteine 86. The segment at 105 to 117 is important for membrane-damaging activities in eukaryotes and bacteria; heparin-binding; the sequence is KKYRYHLKPFCKK.

It belongs to the phospholipase A2 family. Group II subfamily. K49 sub-subfamily. In terms of assembly, homodimer; non-covalently linked. Expressed by the venom gland.

It localises to the secreted. Functionally, snake venom phospholipase A2 (PLA2) homolog that lacks enzymatic activity. Shows myotoxic activity and edema-inducing activities in vivo. A model of myotoxic mechanism has been proposed: an apo Lys49-PLA2 is activated by the entrance of a hydrophobic molecule (e.g. fatty acid) at the hydrophobic channel of the protein leading to a reorientation of a monomer. This reorientation causes a transition between 'inactive' to 'active' states, causing alignment of C-terminal and membrane-docking sites (MDoS) side-by-side and putting the membrane-disruption sites (MDiS) in the same plane, exposed to solvent and in a symmetric position for both monomers. The MDoS region stabilizes the toxin on membrane by the interaction of charged residues with phospholipid head groups. Subsequently, the MDiS region destabilizes the membrane with penetration of hydrophobic residues. This insertion causes a disorganization of the membrane, allowing an uncontrolled influx of ions (i.e. calcium and sodium), and eventually triggering irreversible intracellular alterations and cell death. The protein is Basic phospholipase A2 homolog piratoxin-2 of Bothrops pirajai (Piraja's lancehead).